We begin with the raw amino-acid sequence, 183 residues long: Microfibrillar-associated protein 2 (183 aa).

A signal peptide (or 19) is located at residues Met-1 to Ala-17. The residue at position 18 (Gln-18) is a Pyrrolidone carboxylic acid. Tyr-47, Tyr-48, and Tyr-50 each carry sulfotyrosine. Residues Ser-58 to Pro-94 form a disordered region. The span at Glu-60–Val-74 shows a compositional bias: low complexity. Positions Cys-153 to Cys-183 constitute a ShKT domain. Cystine bridges form between Cys-153/Cys-183, Cys-160/Cys-176, and Cys-169/Cys-180.

The protein belongs to the MFAP family. Forms a ternary complex with BGN and ELN. Interacts with FBN1 (via N-terminal domain) and FBN2. Post-translationally, forms intermolecular disulfide bonds either with other MAGP-1 molecules or with other components of the microfibrils. May form transglutaminase cross-links. O-glycosylated.

The protein resides in the secreted. It localises to the extracellular space. It is found in the extracellular matrix. Component of the elastin-associated microfibrils. The polypeptide is Microfibrillar-associated protein 2 (MFAP2) (Homo sapiens (Human)).